The sequence spans 142 residues: U1 small nuclear ribonucleoprotein C (142 aa).

The Matrin-type zinc-finger motif lies at 4-36 (YYCDYCDTFLTHDSPSVRKTHNGGRKHKDNVRM).

Belongs to the U1 small nuclear ribonucleoprotein C family. U1 snRNP is composed of the 7 core Sm proteins B/B', D1, D2, D3, E, F and G that assemble in a heptameric protein ring on the Sm site of the small nuclear RNA to form the core snRNP, and at least 3 U1 snRNP-specific proteins U1-70K, U1-A and U1-C. U1-C interacts with U1 snRNA and the 5' splice-site region of the pre-mRNA.

The protein resides in the nucleus. Functionally, component of the spliceosomal U1 snRNP, which is essential for recognition of the pre-mRNA 5' splice-site and the subsequent assembly of the spliceosome. U1-C is directly involved in initial 5' splice-site recognition for both constitutive and regulated alternative splicing. The interaction with the 5' splice-site seems to precede base-pairing between the pre-mRNA and the U1 snRNA. Stimulates commitment or early (E) complex formation by stabilizing the base pairing of the 5' end of the U1 snRNA and the 5' splice-site region. The protein is U1 small nuclear ribonucleoprotein C of Caenorhabditis briggsae.